Reading from the N-terminus, the 199-residue chain is Pyridoxine/pyridoxamine 5'-phosphate oxidase (199 aa).

FMN-binding positions include 44 to 49 (RTVLLK), 59 to 60 (YT), Lys-66, and Gln-91. Lys-49 is a binding site for substrate. The substrate site is built by Tyr-109, Arg-113, and Ser-117. Residues 126–127 (QS) and Trp-171 contribute to the FMN site. 177 to 179 (RLH) is a substrate binding site. Arg-181 lines the FMN pocket.

Belongs to the pyridoxamine 5'-phosphate oxidase family. As to quaternary structure, homodimer. FMN serves as cofactor.

The enzyme catalyses pyridoxamine 5'-phosphate + O2 + H2O = pyridoxal 5'-phosphate + H2O2 + NH4(+). It carries out the reaction pyridoxine 5'-phosphate + O2 = pyridoxal 5'-phosphate + H2O2. It functions in the pathway cofactor metabolism; pyridoxal 5'-phosphate salvage; pyridoxal 5'-phosphate from pyridoxamine 5'-phosphate: step 1/1. It participates in cofactor metabolism; pyridoxal 5'-phosphate salvage; pyridoxal 5'-phosphate from pyridoxine 5'-phosphate: step 1/1. Functionally, catalyzes the oxidation of either pyridoxine 5'-phosphate (PNP) or pyridoxamine 5'-phosphate (PMP) into pyridoxal 5'-phosphate (PLP). The polypeptide is Pyridoxine/pyridoxamine 5'-phosphate oxidase (Xanthomonas euvesicatoria pv. vesicatoria (strain 85-10) (Xanthomonas campestris pv. vesicatoria)).